We begin with the raw amino-acid sequence, 102 residues long: Nucleoid-associated protein WIGBR5260 (102 aa).

Belongs to the YbaB/EbfC family. As to quaternary structure, homodimer.

It is found in the cytoplasm. Its subcellular location is the nucleoid. Binds to DNA and alters its conformation. May be involved in regulation of gene expression, nucleoid organization and DNA protection. This is Nucleoid-associated protein WIGBR5260 from Wigglesworthia glossinidia brevipalpis.